Reading from the N-terminus, the 149-residue chain is UPF0260 protein PFL_1499 (149 aa).

It belongs to the UPF0260 family.

The protein is UPF0260 protein PFL_1499 of Pseudomonas fluorescens (strain ATCC BAA-477 / NRRL B-23932 / Pf-5).